Here is a 435-residue protein sequence, read N- to C-terminus: AP-2 complex subunit mu (435 aa).

Ser45 carries the post-translational modification Phosphoserine. Thr156 is modified (phosphothreonine). One can recognise an MHD domain in the interval 170–434 (RNELFLDVLE…IGRSGIYETR (265 aa)). Lys341, Lys345, and Lys354 together coordinate a 1,2-diacyl-sn-glycero-3-phospho-(1D-myo-inositol-3,4,5-trisphosphate).

This sequence belongs to the adaptor complexes medium subunit family. As to quaternary structure, adaptor protein complex 2 (AP-2) is a heterotetramer composed of two large adaptins (alpha-type subunit AP2A1 or AP2A2 and beta-type subunit AP2B1), a medium adaptin (mu-type subunit AP2M1) and a small adaptin (sigma-type subunit AP2S1). Interacts with ATP6V1H and MEGF10. Interacts with EGFR. Interacts with PIP5K1C; tyrosine phosphorylation of PIP5K1C weakens the interaction. Interacts with KIAA0319; required for clathrin-mediated endocytosis of KIAA0319. Interacts with DVL2 (via DEP domain). Interacts with KCNQ1; mediates estrogen-induced internalization via clathrin-coated vesicles. Together with AP2A1 or AP2A2 and AP2B1, it interacts with ADAM10; this interaction facilitates ADAM10 endocytosis from the plasma membrane during long-term potentiation in hippocampal neurons. Probably interacts with ACE2 (via endocytic sorting signal motif); the interaction is inhibited by ACE2 phosphorylation. Interacts with RALBP1; the interaction is direct. Interacts with TMEM106B (via N-terminus). Phosphorylation at Thr-156 increases the affinity of the AP-2 complex for cargo membrane proteins during the initial stages of endocytosis.

The protein resides in the cell membrane. It is found in the membrane. It localises to the coated pit. Functionally, component of the adaptor protein complex 2 (AP-2). Adaptor protein complexes function in protein transport via transport vesicles in different membrane traffic pathways. Adaptor protein complexes are vesicle coat components and appear to be involved in cargo selection and vesicle formation. AP-2 is involved in clathrin-dependent endocytosis in which cargo proteins are incorporated into vesicles surrounded by clathrin (clathrin-coated vesicles, CCVs) which are destined for fusion with the early endosome. The clathrin lattice serves as a mechanical scaffold but is itself unable to bind directly to membrane components. Clathrin-associated adaptor protein (AP) complexes which can bind directly to both the clathrin lattice and to the lipid and protein components of membranes are considered to be the major clathrin adaptors contributing the CCV formation. AP-2 also serves as a cargo receptor to selectively sort the membrane proteins involved in receptor-mediated endocytosis. AP-2 seems to play a role in the recycling of synaptic vesicle membranes from the presynaptic surface. AP-2 recognizes Y-X-X-[FILMV] (Y-X-X-Phi) and [ED]-X-X-X-L-[LI] endocytosis signal motifs within the cytosolic tails of transmembrane cargo molecules. AP-2 may also play a role in maintaining normal post-endocytic trafficking through the ARF6-regulated, non-clathrin pathway. During long-term potentiation in hippocampal neurons, AP-2 is responsible for the endocytosis of ADAM10. The AP-2 mu subunit binds to transmembrane cargo proteins; it recognizes the Y-X-X-Phi motifs. The surface region interacting with to the Y-X-X-Phi motif is inaccessible in cytosolic AP-2, but becomes accessible through a conformational change following phosphorylation of AP-2 mu subunit at Thr-156 in membrane-associated AP-2. The membrane-specific phosphorylation event appears to involve assembled clathrin which activates the AP-2 mu kinase AAK1. Plays a role in endocytosis of frizzled family members upon Wnt signaling. This Pongo abelii (Sumatran orangutan) protein is AP-2 complex subunit mu (AP2M1).